A 504-amino-acid chain; its full sequence is MVSIRPDEISSILKQQIADYDKSVSVSNVGTVLQIGDGIARVYGLEKVMAGELVEFEDGTEGIALNLEDDNVGVVLMGEALGVQEGSTVKATGKIASVPVGEAMLGRVVNPLGQQIDGKGEIATTDTRLIESIAPGIIKRKSVHEPMQTGITSIDAMIPIGRGQRELIIGDRQTGKTAIAIDTIINQKGQDVVCVYVAVGQKQASVANVVEVLKEKGALDYTIIVNAGASEAAALQYLAPYTGAAIAEHFMYQGKATLVIYDDLTKQAQAYRQMSLLLRRPLGREAYPGDVFYCHSRLLERAAKLSDAMGAGSMTSLPIIETQAGDVSAYIPTNVISITDGQIFLSSDLFNSGLRPAINVGISVSRVGGAAQTKAIKKIAGTLKLELAQFDELAAFSQFASDLDEATQKQLGRGKRLRELLKQPQFDPLNLAEQVAIVYAGVKGLIDEVPEEKVVNFARELRDYLKTNKADFLKNVLSEKVLSEASESMLKDAISEVKSSMLAA.

170 to 177 (GDRQTGKT) is an ATP binding site.

This sequence belongs to the ATPase alpha/beta chains family. F-type ATPases have 2 components, CF(1) - the catalytic core - and CF(0) - the membrane proton channel. CF(1) has five subunits: alpha(3), beta(3), gamma(1), delta(1), epsilon(1). CF(0) has four main subunits: a(1), b(1), b'(1) and c(9-12).

It localises to the cellular thylakoid membrane. The enzyme catalyses ATP + H2O + 4 H(+)(in) = ADP + phosphate + 5 H(+)(out). Produces ATP from ADP in the presence of a proton gradient across the membrane. The alpha chain is a regulatory subunit. This is ATP synthase subunit alpha from Prochlorococcus marinus (strain NATL1A).